The following is a 322-amino-acid chain: Phosphatidylserine decarboxylase proenzyme (322 aa).

Residues Asp-90, His-147, and Ser-254 each act as charge relay system; for autoendoproteolytic cleavage activity in the active site. The active-site Schiff-base intermediate with substrate; via pyruvic acid; for decarboxylase activity is Ser-254. A Pyruvic acid (Ser); by autocatalysis modification is found at Ser-254. A disordered region spans residues 294 to 322 (EVEPAPLPADEIKAEHDASPLVDNKKDDT). A compositionally biased stretch (basic and acidic residues) spans 303 to 322 (DEIKAEHDASPLVDNKKDDT).

Belongs to the phosphatidylserine decarboxylase family. PSD-B subfamily. Prokaryotic type I sub-subfamily. Heterodimer of a large membrane-associated beta subunit and a small pyruvoyl-containing alpha subunit. It depends on pyruvate as a cofactor. Is synthesized initially as an inactive proenzyme. Formation of the active enzyme involves a self-maturation process in which the active site pyruvoyl group is generated from an internal serine residue via an autocatalytic post-translational modification. Two non-identical subunits are generated from the proenzyme in this reaction, and the pyruvate is formed at the N-terminus of the alpha chain, which is derived from the carboxyl end of the proenzyme. The autoendoproteolytic cleavage occurs by a canonical serine protease mechanism, in which the side chain hydroxyl group of the serine supplies its oxygen atom to form the C-terminus of the beta chain, while the remainder of the serine residue undergoes an oxidative deamination to produce ammonia and the pyruvoyl prosthetic group on the alpha chain. During this reaction, the Ser that is part of the protease active site of the proenzyme becomes the pyruvoyl prosthetic group, which constitutes an essential element of the active site of the mature decarboxylase.

Its subcellular location is the cell membrane. The enzyme catalyses a 1,2-diacyl-sn-glycero-3-phospho-L-serine + H(+) = a 1,2-diacyl-sn-glycero-3-phosphoethanolamine + CO2. It participates in phospholipid metabolism; phosphatidylethanolamine biosynthesis; phosphatidylethanolamine from CDP-diacylglycerol: step 2/2. Catalyzes the formation of phosphatidylethanolamine (PtdEtn) from phosphatidylserine (PtdSer). The sequence is that of Phosphatidylserine decarboxylase proenzyme from Salmonella paratyphi C (strain RKS4594).